A 31-amino-acid chain; its full sequence is Cyclotide vibi-H (31 aa).

Residues 1–31 (GLLPCAESCVYIPCLTTVIGCSCKSKVCYKN) constitute a cross-link (cyclopeptide (Gly-Asn)). 3 disulfides stabilise this stretch: C5–C21, C9–C23, and C14–C28.

Post-translationally, this is a cyclic peptide.

Its function is as follows. Probably participates in a plant defense mechanism. Has cytotoxic activity, active against a human lymphoma cell line with an IC(50) of 1.6 uM. This Viola biflora (Yellow wood violet) protein is Cyclotide vibi-H.